The following is a 238-amino-acid chain: Large ribosomal subunit protein uL1 (238 aa).

It belongs to the universal ribosomal protein uL1 family. As to quaternary structure, part of the 50S ribosomal subunit.

In terms of biological role, binds directly to 23S rRNA. The L1 stalk is quite mobile in the ribosome, and is involved in E site tRNA release. Protein L1 is also a translational repressor protein, it controls the translation of the L11 operon by binding to its mRNA. The protein is Large ribosomal subunit protein uL1 of Beutenbergia cavernae (strain ATCC BAA-8 / DSM 12333 / CCUG 43141 / JCM 11478 / NBRC 16432 / NCIMB 13614 / HKI 0122).